A 47-amino-acid chain; its full sequence is MVRLLAKLLRSTIHGSNGVSLDAVSSTHGTPGFQTPDARVISRFGFN.

Residues 1–28 (MVRLLAKLLRSTIHGSNGVSLDAVSSTH) constitute a propeptide that is removed on maturation. Residues 29-37 (GTPGFQTPD) constitute a cross-link (isoaspartyl glycine isopeptide (Gly-Asp)).

In terms of processing, it is assumed that the two processing enzymes CapB/CapC convert the precursor protein CapA into the mature lasso peptide capistruin. CapB is assumed to cleave the precursor protein CapA and to set an N-terminal Gly free, whose a-NH2 group acts as the nucleophile in the subsequent cyclization reaction. CapC is most likely involved in the side-chain carboxyl group activation of aspartic acid at position 9 generating the electrophile for the condensation reaction. CapD may export capistruin outside of the producing cells.

It localises to the secreted. Peptide antibiotic that functions through inhibition of the bacterial DNA-dependent RNA polymerase (RNAP). Inhibits transcription by binding in RNAP secondary channel, where it sterically blocks the folding of the trigger loop, which is essential for efficient catalysis. In contrast to MccJ25, does not restrict access of nucleotide substrates to the catalytic center and shows a non-competitive mode of inhibition. Shows activity against closely related Gram-negative Burkholderia and Pseudomonas strains. Is not active against Gram-positive bacteria. This Burkholderia thailandensis (strain ATCC 700388 / DSM 13276 / CCUG 48851 / CIP 106301 / E264) protein is Capistruin.